The chain runs to 134 residues: MQALLLVLVLFIVQIYLLPGNGISLESLAVDKRCKCVKVTNRPTGLGPIIAVDVIPPGIHCRRTEIIFALKKNRKVCVDPEAPWVQQFIKKLERQHRTRKENLMVGEDGGKSTVGPVKNTIEPTPPTIGSHICL.

A signal peptide spans 1–22; it reads MQALLLVLVLFIVQIYLLPGNG.

This sequence belongs to the intercrine alpha (chemokine CxC) family. Homodimer.

The protein localises to the secreted. Its function is as follows. Plays a role in the early phase of cytolytic infections presumably by recruiting host B or T-lymphocytes. This Gallus gallus (Chicken) protein is Viral interleukin-8 homolog (MDV078).